The primary structure comprises 352 residues: Holliday junction branch migration complex subunit RuvB (352 aa).

The interval 13–201 (FSLRKKELRL…FGISQKIEFY (189 aa)) is large ATPase domain (RuvB-L). Residues Arg-41, Gly-82, Lys-85, Thr-86, Thr-87, 148 to 150 (EDF), Arg-191, Tyr-201, and Arg-238 each bind ATP. Thr-86 is a binding site for Mg(2+). The tract at residues 202–273 (TYDELKQIIV…LIKKALNSYQ (72 aa)) is small ATPAse domain (RuvB-S). A head domain (RuvB-H) region spans residues 276 to 352 (EKGLDSLDRN…KYIDSKNENF (77 aa)). Residues Arg-330 and Arg-335 each coordinate DNA.

Belongs to the RuvB family. Homohexamer. Forms an RuvA(8)-RuvB(12)-Holliday junction (HJ) complex. HJ DNA is sandwiched between 2 RuvA tetramers; dsDNA enters through RuvA and exits via RuvB. An RuvB hexamer assembles on each DNA strand where it exits the tetramer. Each RuvB hexamer is contacted by two RuvA subunits (via domain III) on 2 adjacent RuvB subunits; this complex drives branch migration. In the full resolvosome a probable DNA-RuvA(4)-RuvB(12)-RuvC(2) complex forms which resolves the HJ.

The protein localises to the cytoplasm. It catalyses the reaction ATP + H2O = ADP + phosphate + H(+). Its function is as follows. The RuvA-RuvB-RuvC complex processes Holliday junction (HJ) DNA during genetic recombination and DNA repair, while the RuvA-RuvB complex plays an important role in the rescue of blocked DNA replication forks via replication fork reversal (RFR). RuvA specifically binds to HJ cruciform DNA, conferring on it an open structure. The RuvB hexamer acts as an ATP-dependent pump, pulling dsDNA into and through the RuvAB complex. RuvB forms 2 homohexamers on either side of HJ DNA bound by 1 or 2 RuvA tetramers; 4 subunits per hexamer contact DNA at a time. Coordinated motions by a converter formed by DNA-disengaged RuvB subunits stimulates ATP hydrolysis and nucleotide exchange. Immobilization of the converter enables RuvB to convert the ATP-contained energy into a lever motion, pulling 2 nucleotides of DNA out of the RuvA tetramer per ATP hydrolyzed, thus driving DNA branch migration. The RuvB motors rotate together with the DNA substrate, which together with the progressing nucleotide cycle form the mechanistic basis for DNA recombination by continuous HJ branch migration. Branch migration allows RuvC to scan DNA until it finds its consensus sequence, where it cleaves and resolves cruciform DNA. This chain is Holliday junction branch migration complex subunit RuvB, found in Prochlorococcus marinus (strain MIT 9215).